The following is a 96-amino-acid chain: ATP-dependent Clp protease adapter protein ClpS (96 aa).

Belongs to the ClpS family. As to quaternary structure, binds to the N-terminal domain of the chaperone ClpA.

In terms of biological role, involved in the modulation of the specificity of the ClpAP-mediated ATP-dependent protein degradation. The protein is ATP-dependent Clp protease adapter protein ClpS of Streptomyces coelicolor (strain ATCC BAA-471 / A3(2) / M145).